Reading from the N-terminus, the 388-residue chain is Probable serine/threonine-protein kinase PBL20 (388 aa).

Cys-3 is lipidated: S-palmitoyl cysteine. The Protein kinase domain maps to Phe-91–Ile-372. Residues Ile-97–Val-105 and Lys-128 each bind ATP. The active-site Proton acceptor is the Asp-221.

The protein belongs to the protein kinase superfamily. Ser/Thr protein kinase family.

The protein localises to the cell membrane. The enzyme catalyses L-seryl-[protein] + ATP = O-phospho-L-seryl-[protein] + ADP + H(+). It carries out the reaction L-threonyl-[protein] + ATP = O-phospho-L-threonyl-[protein] + ADP + H(+). Functionally, may be involved in plant defense signaling. This chain is Probable serine/threonine-protein kinase PBL20, found in Arabidopsis thaliana (Mouse-ear cress).